The sequence spans 183 residues: ATP synthase subunit b, chloroplastic (183 aa).

The helical transmembrane segment at 27 to 49 threads the bilayer; the sequence is LATNLINLTVVVGVLIFFGKGVL.

It belongs to the ATPase B chain family. As to quaternary structure, F-type ATPases have 2 components, F(1) - the catalytic core - and F(0) - the membrane proton channel. F(1) has five subunits: alpha(3), beta(3), gamma(1), delta(1), epsilon(1). F(0) has four main subunits: a(1), b(1), b'(1) and c(10-14). The alpha and beta chains form an alternating ring which encloses part of the gamma chain. F(1) is attached to F(0) by a central stalk formed by the gamma and epsilon chains, while a peripheral stalk is formed by the delta, b and b' chains.

The protein localises to the plastid. Its subcellular location is the chloroplast thylakoid membrane. F(1)F(0) ATP synthase produces ATP from ADP in the presence of a proton or sodium gradient. F-type ATPases consist of two structural domains, F(1) containing the extramembraneous catalytic core and F(0) containing the membrane proton channel, linked together by a central stalk and a peripheral stalk. During catalysis, ATP synthesis in the catalytic domain of F(1) is coupled via a rotary mechanism of the central stalk subunits to proton translocation. In terms of biological role, component of the F(0) channel, it forms part of the peripheral stalk, linking F(1) to F(0). This Hordeum vulgare (Barley) protein is ATP synthase subunit b, chloroplastic.